The chain runs to 500 residues: Protein shisa-6 (500 aa).

The N-terminal stretch at 1–25 is a signal peptide; it reads MALRRLLLLLLLSLESLDLLPSVHG. Residues 26 to 174 are Extracellular-facing; sequence ARGRAANRTL…NKYDPEKDKT (149 aa). N-linked (GlcNAc...) asparagine glycans are attached at residues asparagine 32 and asparagine 59. The interval 52–73 is disordered; the sequence is ARGGRELNGTARAPGIPEAGSR. A helical membrane pass occupies residues 175-195; the sequence is NFTVYITCGVIAFVIVAGVFA. Residues 196-500 are Cytoplasmic-facing; sequence KVSYDKAHRP…YTASKTEVTV (305 aa). A compositionally biased stretch (polar residues) spans 240-255; the sequence is TSPKENTPVRSSSKNH. 2 disordered regions span residues 240-269 and 349-378; these read TSPKENTPVRSSSKNHYTPVRTAKQTPEKP and SQQKPLPRERPRRPIRAMSQDRVLSPDRGL. 3 positions are modified to phosphoserine: serine 391, serine 397, and serine 409. Threonine 433 carries the post-translational modification Phosphothreonine. The tract at residues 444–470 is disordered; it reads MHSHPSASNNSYATLGQSQTAAKRHAF. The segment covering 448–464 has biased composition (polar residues); sequence PSASNNSYATLGQSQTA. At threonine 477 the chain carries Phosphothreonine. Residues 497–500 carry the PDZ-binding motif; the sequence is EVTV.

Belongs to the shisa family. As to quaternary structure, component of the postsynaptic hippocampal AMPA-type glutamate receptor (AMPAR) complex, at least composed of pore forming AMPAR subunits GRIA1, GRIA2 and GRIA3 and AMPAR auxiliary proteins SHISA6 and SHISA7. Interacts (via PDZ-binding motif) with DLG4/PSD-95 (via PDZ domain); the interaction is direct. As to expression, expressed in the developing ventral mesencephalon.

The protein resides in the membrane. It is found in the postsynaptic density. Its function is as follows. Involved in maintenance of high-frequency synaptic transmission at hippocampal CA3-CA1 synapses. Regulates AMPA-type glutamate receptor (AMPAR) immobilization at postsynaptic density keeping the channels in an activated state in the presence of glutamate and preventing synaptic depression. May play a role in self-renewal and differentiation of spermatogonial stem cells by inhibiting canonical Wnt signaling pathway. This Homo sapiens (Human) protein is Protein shisa-6.